The chain runs to 311 residues: HPr kinase/phosphorylase (311 aa).

Residues histidine 138 and lysine 159 contribute to the active site. 153–160 (GDSGIGKS) is a binding site for ATP. Mg(2+) is bound at residue serine 160. Aspartate 177 serves as the catalytic Proton acceptor; for phosphorylation activity. Proton donor; for dephosphorylation activity. The tract at residues 201 to 210 (IEIRGVGIID) is important for the catalytic mechanism of both phosphorylation and dephosphorylation. Glutamate 202 contributes to the Mg(2+) binding site. Residue arginine 243 is part of the active site. The tract at residues 264 to 269 (PVKTGR) is important for the catalytic mechanism of dephosphorylation.

This sequence belongs to the HPrK/P family. Homohexamer. Mg(2+) is required as a cofactor.

The catalysed reaction is [HPr protein]-L-serine + ATP = [HPr protein]-O-phospho-L-serine + ADP + H(+). It carries out the reaction [HPr protein]-O-phospho-L-serine + phosphate + H(+) = [HPr protein]-L-serine + diphosphate. In terms of biological role, catalyzes the ATP- as well as the pyrophosphate-dependent phosphorylation of a specific serine residue in HPr, a phosphocarrier protein of the phosphoenolpyruvate-dependent sugar phosphotransferase system (PTS). HprK/P also catalyzes the pyrophosphate-producing, inorganic phosphate-dependent dephosphorylation (phosphorolysis) of seryl-phosphorylated HPr (P-Ser-HPr). The two antagonistic activities of HprK/P are regulated by several intracellular metabolites, which change their concentration in response to the absence or presence of rapidly metabolisable carbon sources (glucose, fructose, etc.) in the growth medium. Therefore, by controlling the phosphorylation state of HPr, HPrK/P is a sensor enzyme that plays a major role in the regulation of carbon metabolism and sugar transport: it mediates carbon catabolite repression (CCR), and regulates PTS-catalyzed carbohydrate uptake and inducer exclusion. The polypeptide is HPr kinase/phosphorylase (Streptococcus pneumoniae (strain 70585)).